Reading from the N-terminus, the 838-residue chain is Periostin (838 aa).

The signal sequence occupies residues 1–23 (MVPLLPLYALLLLFLCDINPANA). The EMI domain maps to 42-96 (GPNVCALQQILGTKKKYFSSCKNWYQGAICGKKTTVLYECCPGYMRMEGMKGCPA). 5 disulfides stabilise this stretch: Cys46–Cys82, Cys71–Cys335, Cys81–Cys94, Cys210–Cys313, and Cys469–Cys474. Cys62 carries the S-cysteinyl cysteine modification. 4 consecutive FAS1 domains span residues 99–232 (PIDH…DRVL), 236–367 (GTSI…DEVL), 370–494 (DSAK…REII), and 498–630 (EKSL…DKLL). The N-linked (GlcNAc...) asparagine glycan is linked to Asn601. The disordered stretch occupies residues 811–838 (QGDTPAKKIPANKRVQGPRRRSREGRSQ). Basic residues predominate over residues 826–838 (QGPRRRSREGRSQ).

In terms of assembly, homodimer. Interacts with BMP1 and fibronectin. In terms of processing, gamma-carboxylation is controversial. Gamma-carboxyglutamated; gamma-carboxyglutamate residues are formed by vitamin K dependent carboxylation; these residues may be required for binding to calcium. According to a more recent report in human, does not contain vitamin K-dependent gamma-carboxyglutamate residues. Preferentially expressed in periosteum and periodontal ligament. Also expressed in the developing and adult heart.

It is found in the golgi apparatus. It localises to the secreted. The protein resides in the extracellular space. The protein localises to the extracellular matrix. In terms of biological role, induces cell attachment and spreading and plays a role in cell adhesion. Enhances incorporation of BMP1 in the fibronectin matrix of connective tissues, and subsequent proteolytic activation of lysyl oxidase LOX. This Mus musculus (Mouse) protein is Periostin (Postn).